The chain runs to 316 residues: Olfactory receptor 10H4 (316 aa).

Topologically, residues 1–26 (MPSQNYSIISEFNLFGFSAFPQHLLP) are extracellular. N-linked (GlcNAc...) asparagine glycosylation is present at Asn-5. A helical membrane pass occupies residues 27–47 (ILFLLYLLMFLFTLLGNLLIM). Over 48-55 (ATIWIEHR) the chain is Cytoplasmic. Residues 56 to 76 (LHTPMYLFLCTLSVSEILFTV) form a helical membrane-spanning segment. Residues 77–100 (AITPRMLADLLSTHHSITFVACAN) are Extracellular-facing. Cys-98 and Cys-190 are oxidised to a cystine. The chain crosses the membrane as a helical span at residues 101 to 121 (QMFFSFMFGFTHSFLLLVMGY). At 122–140 (DRYVAICHPLRYNVLMSPR) the chain is on the cytoplasmic side. Residues 141 to 161 (DCAHLVACTWAGGSVMGMMVT) form a helical membrane-spanning segment. Residues 162–198 (TIVFHLTFCGSNVIHHFFCHVLSLLKLACENKTSSVI) are Extracellular-facing. A helical membrane pass occupies residues 199–219 (MGVMLVCVTALIGCLFLIILS). The Cytoplasmic segment spans residues 220–239 (YVFIVAAILRIPSAEGRHKT). Residues 240–260 (FSTCVSHLTVVVTHYSFASFI) form a helical membrane-spanning segment. The Extracellular portion of the chain corresponds to 261–273 (YLKPKGLHSMYSD). Residues 274-294 (ALMATTYTVFTPFLSPIIFSL) form a helical membrane-spanning segment. The Cytoplasmic portion of the chain corresponds to 295-316 (RNKELKNAINKNFYRKFCPPSS).

The protein belongs to the G-protein coupled receptor 1 family.

The protein resides in the cell membrane. In terms of biological role, odorant receptor. This Homo sapiens (Human) protein is Olfactory receptor 10H4 (OR10H4).